A 345-amino-acid polypeptide reads, in one-letter code: Serpentine receptor class beta-5 (345 aa).

Topologically, residues 1–22 (MAEINQTKCDLAFQISYHPIYR) are extracellular. N5 carries an N-linked (GlcNAc...) asparagine glycan. Residues 23-43 (LAQFWTLSVSLLAVPSLLYFL) form a helical membrane-spanning segment. Topologically, residues 44 to 57 (LKRVLLLPFHGNLK) are cytoplasmic. A helical membrane pass occupies residues 58–78 (CLLITYFSSIFLYALVLCFDF). The Extracellular portion of the chain corresponds to 79–103 (SYQCLIPFIVTTKCSLIIDQTLYKC). The helical transmembrane segment at 104–124 (GHMTSLFFLTTPMLLPFGFSI) threads the bilayer. At 125 to 142 (ERFVAVGMAYKYEKMRTL) the chain is on the cytoplasmic side. A helical transmembrane segment spans residues 143-163 (LGPILCFILVAPNFVVFYFLF). The Extracellular portion of the chain corresponds to 164–189 (RDEQFTDSFISFLVLPNTPAVQFNNY). The chain crosses the membrane as a helical span at residues 190 to 210 (LWFLLYAKIGNFCCNCVLLIF). At 211-241 (HKRFKNTYLKKKTSLSVRYALEEISNSSKFT) the chain is on the cytoplasmic side. The chain crosses the membrane as a helical span at residues 242–262 (LILTFTHLVFFGAYTIGSILV). The Extracellular segment spans residues 263–280 (RTLGESFFGNFLNFYVAR). A helical transmembrane segment spans residues 281 to 301 (GVNCAVPTYNLLIAFVGLISL). The Cytoplasmic portion of the chain corresponds to 302–345 (RQLNSRRHAKILTKVLIRVTGQEGARNYDDIIMQQWNTVSNRTR).

Belongs to the nematode receptor-like protein srb family. Expressed throughout the head.

It is found in the cell membrane. The protein localises to the perikaryon. The protein resides in the cell projection. It localises to the dendrite. Its function is as follows. G-protein coupled receptor. Plays a role in the navigational capacity of sperm and promotes the targeting of sperm derived from males to the fertilization site in the uterus of hermaphrodites. The chain is Serpentine receptor class beta-5 from Caenorhabditis elegans.